Here is an 88-residue protein sequence, read N- to C-terminus: DNA-directed RNA polymerase subunit omega (88 aa).

Belongs to the RNA polymerase subunit omega family. As to quaternary structure, the RNAP catalytic core consists of 2 alpha, 1 beta, 1 beta' and 1 omega subunit. When a sigma factor is associated with the core the holoenzyme is formed, which can initiate transcription.

It carries out the reaction RNA(n) + a ribonucleoside 5'-triphosphate = RNA(n+1) + diphosphate. In terms of biological role, promotes RNA polymerase assembly. Latches the N- and C-terminal regions of the beta' subunit thereby facilitating its interaction with the beta and alpha subunits. The chain is DNA-directed RNA polymerase subunit omega from Anaeromyxobacter sp. (strain Fw109-5).